The chain runs to 383 residues: MAEMRGMLLMLLYISHSSSAICGIQKATIADKLKENLVSSTEFPWVVSIQDKQYTHLAFGCILSEFWILSTASALQHRPEVIAVVGISNMDPRKTDHREYSVNTIIPHENFDNVSMGNNIALLKTESAMHFNDLVQAICFLGKKLHKPPALKNCWVAGWNPTSATGNHMTMSILRRISVKDIEVCPLRRHQKTECASHTKEPNNVCLGEPGSPMMCQAKKLDLWILRGLLAYGGDSCPGLFLYTSVADYSDWITAKTRKAGPSLSSLHLWEKLVFELPFHESNIALTTNSFSIHTYAEWPHSYSQGQRMSTKSNKQKDAGQNFRVNRQPETSGPSKVAIQPMYYDYYGGEAGEGGAVAGQNRLHWSQERILMSFVLVFLGSGV.

The N-terminal stretch at 1-20 is a signal peptide; it reads MAEMRGMLLMLLYISHSSSA. Residues 21-258 form the Peptidase S1 domain; that stretch reads ICGIQKATIA…YSDWITAKTR (238 aa). A glycan (N-linked (GlcNAc...) asparagine) is linked at N113. Disulfide bonds link C154–C216, C185–C195, and C206–C237. Positions 305 to 334 are disordered; sequence QGQRMSTKSNKQKDAGQNFRVNRQPETSGP. Residues 323–334 show a composition bias toward polar residues; sequence FRVNRQPETSGP.

The protein belongs to the peptidase S1 family. Plasma kallikrein subfamily.

Its subcellular location is the secreted. This chain is Inactive serine protease 54 (Prss54), found in Mus musculus (Mouse).